The sequence spans 253 residues: Ribosomal RNA small subunit methyltransferase J (253 aa).

S-adenosyl-L-methionine-binding positions include 101–102, 117–118, and Asp169; these read RD and ER.

It belongs to the methyltransferase superfamily. RsmJ family.

The protein localises to the cytoplasm. The catalysed reaction is guanosine(1516) in 16S rRNA + S-adenosyl-L-methionine = N(2)-methylguanosine(1516) in 16S rRNA + S-adenosyl-L-homocysteine + H(+). In terms of biological role, specifically methylates the guanosine in position 1516 of 16S rRNA. This Psychromonas ingrahamii (strain DSM 17664 / CCUG 51855 / 37) protein is Ribosomal RNA small subunit methyltransferase J.